A 775-amino-acid polypeptide reads, in one-letter code: Ribonucleoside-diphosphate reductase large subunit (775 aa).

Substrate-binding positions include T200, 215 to 216, G246, 427 to 431, and 606 to 610; these read SC, NLCTE, and PTVSS. A disulfide bond links C216 and C444. N427 serves as the catalytic Proton acceptor. C429 acts as the Cysteine radical intermediate in catalysis. E431 acts as the Proton acceptor in catalysis.

Belongs to the ribonucleoside diphosphate reductase large chain family. Heterotetramer composed of a homodimer of the large subunit (R1) and a homodimer of the small subunit (R2). Larger multisubunit protein complex are also active, composed of (R1)n(R2)n.

The enzyme catalyses a 2'-deoxyribonucleoside 5'-diphosphate + [thioredoxin]-disulfide + H2O = a ribonucleoside 5'-diphosphate + [thioredoxin]-dithiol. Its function is as follows. Ribonucleoside-diphosphate reductase holoenzyme provides the precursors necessary for viral DNA synthesis. Allows virus growth in non-dividing cells, as well as reactivation from latency in infected hosts. Catalyzes the biosynthesis of deoxyribonucleotides from the corresponding ribonucleotides. This Homo sapiens (Human) protein is Ribonucleoside-diphosphate reductase large subunit.